Here is a 213-residue protein sequence, read N- to C-terminus: Orotate phosphoribosyltransferase (213 aa).

K26 serves as a coordination point for 5-phospho-alpha-D-ribose 1-diphosphate. 34–35 (FF) lines the orotate pocket. 5-phospho-alpha-D-ribose 1-diphosphate-binding positions include 72-73 (YK), R99, K100, K103, H105, and 124-132 (DDVITAGTA). Orotate-binding residues include T128 and R156.

It belongs to the purine/pyrimidine phosphoribosyltransferase family. PyrE subfamily. In terms of assembly, homodimer. Requires Mg(2+) as cofactor.

It catalyses the reaction orotidine 5'-phosphate + diphosphate = orotate + 5-phospho-alpha-D-ribose 1-diphosphate. It functions in the pathway pyrimidine metabolism; UMP biosynthesis via de novo pathway; UMP from orotate: step 1/2. Catalyzes the transfer of a ribosyl phosphate group from 5-phosphoribose 1-diphosphate to orotate, leading to the formation of orotidine monophosphate (OMP). This Photorhabdus laumondii subsp. laumondii (strain DSM 15139 / CIP 105565 / TT01) (Photorhabdus luminescens subsp. laumondii) protein is Orotate phosphoribosyltransferase.